Consider the following 207-residue polypeptide: dTTP/UTP pyrophosphatase (207 aa).

Asp79 acts as the Proton acceptor in catalysis.

The protein belongs to the Maf family. YhdE subfamily. A divalent metal cation is required as a cofactor.

It localises to the cytoplasm. It carries out the reaction dTTP + H2O = dTMP + diphosphate + H(+). It catalyses the reaction UTP + H2O = UMP + diphosphate + H(+). Functionally, nucleoside triphosphate pyrophosphatase that hydrolyzes dTTP and UTP. May have a dual role in cell division arrest and in preventing the incorporation of modified nucleotides into cellular nucleic acids. The polypeptide is dTTP/UTP pyrophosphatase (Rhodopseudomonas palustris (strain BisB18)).